The following is a 470-amino-acid chain: Putative ankyrin repeat protein L279 (470 aa).

ANK repeat units lie at residues 119–148 (RDDY…NPGT), 149–178 (NKYA…GSDK), 372–401 (ETQG…NVNE), and 403–431 (NGKP…DISL).

The protein is Putative ankyrin repeat protein L279 of Acanthamoeba polyphaga (Amoeba).